A 233-amino-acid chain; its full sequence is Isoprenyl transferase (233 aa).

Asp-12 is a catalytic residue. Asp-12 lines the Mg(2+) pocket. Substrate contacts are provided by residues 13–16 (GNGR), Trp-17, Arg-25, His-29, and 57–59 (STE). The active-site Proton acceptor is Asn-60. Residues Trp-61, Arg-63, Arg-178, and 184–186 (RLS) each bind substrate. Residue Glu-197 coordinates Mg(2+).

The protein belongs to the UPP synthase family. Homodimer. It depends on Mg(2+) as a cofactor.

In terms of biological role, catalyzes the condensation of isopentenyl diphosphate (IPP) with allylic pyrophosphates generating different type of terpenoids. In Thermotoga maritima (strain ATCC 43589 / DSM 3109 / JCM 10099 / NBRC 100826 / MSB8), this protein is Isoprenyl transferase.